Reading from the N-terminus, the 604-residue chain is Integrin alpha-IIb (604 aa).

Residues 1–61 (QVLDSPFPTG…ASVQLLVQDS (61 aa)) form an FG-GAP repeat. The Extracellular portion of the chain corresponds to 1 to 558 (QVLDSPFPTG…TQLLRALEER (558 aa)). Asp22, Asp24, Asn26, Tyr28, and Asp30 together coordinate Ca(2+). 2 cysteine pairs are disulfide-bonded: Cys69/Cys80 and Cys86/Cys141. Residue Asn166 is glycosylated (N-linked (GlcNAc...) asparagine). Intrachain disulfides connect Cys198/Cys204, Cys270/Cys283, Cys422/Cys486, and Cys476/Cys481. Asn276 is a glycosylation site (N-linked (GlcNAc...) asparagine). Asn527 carries N-linked (GlcNAc...) asparagine glycosylation. The helical transmembrane segment at 559–584 (AIPIWWVLVGVLGGLLLLTILVLAMW) threads the bilayer. Residues 585–604 (KVGFFKRNRPPLEEDDEEGE) lie on the Cytoplasmic side of the membrane. The GFFKR motif signature appears at 587-591 (GFFKR).

Belongs to the integrin alpha chain family. Heterodimer of an alpha and a beta subunit. The alpha subunit is composed of a heavy and a light chain linked by a disulfide bond. Alpha-IIb associates with beta-3. Directly interacts with RNF181. Interacts (via C-terminus cytoplasmic tail region) with CIB1; the interaction is direct and calcium-dependent. Interacts (via C-terminus cytoplasmic tail region) with CIB2, CIB3 and CIB4; the interactions are stabilized/increased in a calcium and magnesium-dependent manner. ITGA2B:ITGB3 interacts with PPIA/CYPA; the interaction is ROS and PPIase activity-dependent and is increased in the presence of thrombin. ITGA2B:ITGB3 interacts with SELP (via C-type lectin domain); the interaction mediates cell-cell interaction and adhesion.

Its subcellular location is the membrane. Integrin alpha-IIb/beta-3 is a receptor for fibronectin, fibrinogen, plasminogen, prothrombin, thrombospondin and vitronectin. It recognizes the sequence R-G-D in a wide array of ligands. It recognizes the sequence H-H-L-G-G-G-A-K-Q-A-G-D-V in fibrinogen gamma chain. Following activation integrin alpha-IIb/beta-3 brings about platelet/platelet interaction through binding of soluble fibrinogen. This step leads to rapid platelet aggregation which physically plugs ruptured endothelial cell surface. The sequence is that of Integrin alpha-IIb (ITGA2B) from Papio cynocephalus (Yellow baboon).